We begin with the raw amino-acid sequence, 214 residues long: Thymidylate kinase (214 aa).

Residue 10 to 17 (GGEGAGKS) participates in ATP binding.

This sequence belongs to the thymidylate kinase family.

It catalyses the reaction dTMP + ATP = dTDP + ADP. Its function is as follows. Phosphorylation of dTMP to form dTDP in both de novo and salvage pathways of dTTP synthesis. This is Thymidylate kinase from Brucella suis biovar 1 (strain 1330).